Reading from the N-terminus, the 155-residue chain is Ribosomal RNA large subunit methyltransferase H (155 aa).

S-adenosyl-L-methionine contacts are provided by residues leucine 72, glycine 103, and 122-127; that span reads LSDLTL.

Belongs to the RNA methyltransferase RlmH family. Homodimer.

It localises to the cytoplasm. It catalyses the reaction pseudouridine(1915) in 23S rRNA + S-adenosyl-L-methionine = N(3)-methylpseudouridine(1915) in 23S rRNA + S-adenosyl-L-homocysteine + H(+). Functionally, specifically methylates the pseudouridine at position 1915 (m3Psi1915) in 23S rRNA. The chain is Ribosomal RNA large subunit methyltransferase H from Polaromonas naphthalenivorans (strain CJ2).